A 352-amino-acid polypeptide reads, in one-letter code: MSKTILVMAGGTGGHIFPALAVAHKLRDAGWRVVWLGNPEGMEARLVPQHGFEMVWIKFSALRGKGILRKLLLPVNLLRGFWQGLKAIRQVKPNVVLGMGGYITFPGGMMAALTGVPLVLHEQNSVAGLANRVLASVADRIVTGFPDVIKNGTWVGNPVRPEIAAIAAPAERFAERTGALRLLVIGGSLGAQVLNEMVPQAMALLGESDQPQIVHQAGEKHIEALKANYAAVGVQAHCVSFVEDMAGAYEWADLVICRAGALTIAELAAAGVASILVPFPHAVDDHQTGNAKFLVHAGGAFLLPQTELTPDAIALIRNYSRSQLLEMAEKARSLAKPDATEAVAQICSEIAK.

UDP-N-acetyl-alpha-D-glucosamine is bound by residues 12–14 (TGG), Asn-124, Arg-160, Ser-188, and Gln-287.

It belongs to the glycosyltransferase 28 family. MurG subfamily.

Its subcellular location is the cell inner membrane. The catalysed reaction is di-trans,octa-cis-undecaprenyl diphospho-N-acetyl-alpha-D-muramoyl-L-alanyl-D-glutamyl-meso-2,6-diaminopimeloyl-D-alanyl-D-alanine + UDP-N-acetyl-alpha-D-glucosamine = di-trans,octa-cis-undecaprenyl diphospho-[N-acetyl-alpha-D-glucosaminyl-(1-&gt;4)]-N-acetyl-alpha-D-muramoyl-L-alanyl-D-glutamyl-meso-2,6-diaminopimeloyl-D-alanyl-D-alanine + UDP + H(+). The protein operates within cell wall biogenesis; peptidoglycan biosynthesis. Cell wall formation. Catalyzes the transfer of a GlcNAc subunit on undecaprenyl-pyrophosphoryl-MurNAc-pentapeptide (lipid intermediate I) to form undecaprenyl-pyrophosphoryl-MurNAc-(pentapeptide)GlcNAc (lipid intermediate II). The polypeptide is UDP-N-acetylglucosamine--N-acetylmuramyl-(pentapeptide) pyrophosphoryl-undecaprenol N-acetylglucosamine transferase (Dechloromonas aromatica (strain RCB)).